A 245-amino-acid chain; its full sequence is 1-(5-phosphoribosyl)-5-[(5-phosphoribosylamino)methylideneamino] imidazole-4-carboxamide isomerase (245 aa).

The active-site Proton acceptor is the Asp7. The active-site Proton donor is the Asp129.

Belongs to the HisA/HisF family.

It localises to the cytoplasm. The catalysed reaction is 1-(5-phospho-beta-D-ribosyl)-5-[(5-phospho-beta-D-ribosylamino)methylideneamino]imidazole-4-carboxamide = 5-[(5-phospho-1-deoxy-D-ribulos-1-ylimino)methylamino]-1-(5-phospho-beta-D-ribosyl)imidazole-4-carboxamide. It participates in amino-acid biosynthesis; L-histidine biosynthesis; L-histidine from 5-phospho-alpha-D-ribose 1-diphosphate: step 4/9. This Idiomarina loihiensis (strain ATCC BAA-735 / DSM 15497 / L2-TR) protein is 1-(5-phosphoribosyl)-5-[(5-phosphoribosylamino)methylideneamino] imidazole-4-carboxamide isomerase.